Here is a 340-residue protein sequence, read N- to C-terminus: Mitochondrial carrier protein CoAc1 (340 aa).

Transmembrane regions (helical) follow at residues Ala22 to Phe42, Phe85 to Met105, Leu130 to Leu147, Gly199 to Glu219, Leu237 to Val257, and Phe297 to Thr317. Solcar repeat units follow at residues Pro27–Trp113, Thr124–Gln224, and Asp231–Leu324.

This sequence belongs to the mitochondrial carrier (TC 2.A.29) family. As to expression, expressed throughout the plant.

The protein resides in the mitochondrion inner membrane. Required for the accumulation of coenzyme A in the mitochondrial matrix. The polypeptide is Mitochondrial carrier protein CoAc1 (Zea mays (Maize)).